The chain runs to 252 residues: dITP/XTP pyrophosphatase (252 aa).

A substrate-binding site is contributed by T7–K12. D74 acts as the Proton acceptor in catalysis. Position 74 (D74) interacts with Mg(2+). Substrate is bound by residues S75 and F193–D196. Positions D202–E229 are disordered. Residues K230 and H235–R236 contribute to the substrate site.

It belongs to the HAM1 NTPase family. As to quaternary structure, homodimer. It depends on Mg(2+) as a cofactor.

The enzyme catalyses XTP + H2O = XMP + diphosphate + H(+). The catalysed reaction is dITP + H2O = dIMP + diphosphate + H(+). It catalyses the reaction ITP + H2O = IMP + diphosphate + H(+). Its function is as follows. Pyrophosphatase that catalyzes the hydrolysis of nucleoside triphosphates to their monophosphate derivatives, with a high preference for the non-canonical purine nucleotides XTP (xanthosine triphosphate), dITP (deoxyinosine triphosphate) and ITP. Seems to function as a house-cleaning enzyme that removes non-canonical purine nucleotides from the nucleotide pool, thus preventing their incorporation into DNA/RNA and avoiding chromosomal lesions. In Bifidobacterium longum (strain DJO10A), this protein is dITP/XTP pyrophosphatase.